Reading from the N-terminus, the 421-residue chain is 5-hydroxytryptamine receptor 2 (421 aa).

Topologically, residues 1 to 21 (MLCGRLRHTMNSTTCFFSHRT) are extracellular. N-linked (GlcNAc...) asparagine glycosylation occurs at asparagine 11. Residues 22–42 (VLIGIVGSLIIAVSVVGNVLV) form a helical membrane-spanning segment. Topologically, residues 43–59 (CLAIFTEPILSHSKSKF) are cytoplasmic. A helical transmembrane segment spans residues 60–79 (FIVSLAVADLLLALLVMTFA). Residues 80-95 (LVNSLYGYWLFGETFC) lie on the Extracellular side of the membrane. The cysteines at positions 95 and 210 are disulfide-linked. Residues 96–118 (FIWMSADVMCETASIFSICVISY) traverse the membrane as a helical segment. Over 119-138 (NRLKQVQKPLQYEEFMTTTR) the chain is Cytoplasmic. Residues 139-160 (ALLIIASLWICSFVVSFVPFFL) form a helical membrane-spanning segment. The Extracellular segment spans residues 161-213 (EWHELSMEEIKTIFKDLISDKVKTSDAHTFSFALEQTLGDNRTSNPKPECLFD). A helical membrane pass occupies residues 214–234 (VHFIYSVIYSLFCFYIPCTLM). Residues 235–274 (LRNYLRLFLIAKKHHVRIKNLHRLHRNQGTQGSKAARTLT) lie on the Cytoplasmic side of the membrane. Residues 275 to 295 (IITGTFLACWLPFFIINPIEA) traverse the membrane as a helical segment. Over 296 to 304 (VDEHLIPLE) the chain is Extracellular. Residues 305-325 (CFMVTIWLGYFNSCVNPIIYG) traverse the membrane as a helical segment. Residues 326–421 (TSNSKFRAAF…MLSESDTVFS (96 aa)) are Cytoplasmic-facing.

Belongs to the G-protein coupled receptor 1 family. As to expression, central nervous system.

It localises to the cell membrane. Functionally, this is one of the several different receptors for 5-hydroxytryptamine (serotonin). 5-HT plays important roles in various behavioral and physiological processes in aplysia. These include feeding, locomotion, circadian rhythm, learning and memory, synaptic plasticity, and synaptic growth. This receptor is mediated by G proteins that stimulate phospholipase C. This chain is 5-hydroxytryptamine receptor 2 (5HTB2), found in Aplysia californica (California sea hare).